We begin with the raw amino-acid sequence, 217 residues long: MTAPLTLALSKGRIFEETLPLLAAAGVQVTEDPETSRKLILPTTNPDLRVIIVRASDVPTYVEYGAADFGVAGKDVLVEHGGSGLYQPIDLNIARCRMSVAVSAGFDYASAVRQGARLRVATKYVETAREHFAAKGVHVDLIKLYGSMELAPLVGLADAIVDLVSSGGTLKANNLVEVEEIMAISSRLVVNQAALKLKRTALKPILDAFERASQNGG.

Belongs to the ATP phosphoribosyltransferase family. Short subfamily. In terms of assembly, heteromultimer composed of HisG and HisZ subunits.

It is found in the cytoplasm. It carries out the reaction 1-(5-phospho-beta-D-ribosyl)-ATP + diphosphate = 5-phospho-alpha-D-ribose 1-diphosphate + ATP. The protein operates within amino-acid biosynthesis; L-histidine biosynthesis; L-histidine from 5-phospho-alpha-D-ribose 1-diphosphate: step 1/9. Catalyzes the condensation of ATP and 5-phosphoribose 1-diphosphate to form N'-(5'-phosphoribosyl)-ATP (PR-ATP). Has a crucial role in the pathway because the rate of histidine biosynthesis seems to be controlled primarily by regulation of HisG enzymatic activity. In Burkholderia lata (strain ATCC 17760 / DSM 23089 / LMG 22485 / NCIMB 9086 / R18194 / 383), this protein is ATP phosphoribosyltransferase.